The chain runs to 480 residues: Alpha,alpha-trehalose-phosphate synthase [UDP-forming] 2 (480 aa).

2 residues coordinate D-glucose 6-phosphate: tyrosine 97 and aspartate 151. Residues arginine 288 and lysine 293 each contribute to the UDP site. UDP-alpha-D-glucose-binding residues include arginine 288 and lysine 293. Arginine 326 is a D-glucose 6-phosphate binding site. 387–395 is a binding site for UDP-alpha-D-glucose; it reads DGMNLVSFE. A UDP-binding site is contributed by 391–395; that stretch reads LVSFE.

It belongs to the glycosyltransferase 20 family.

It carries out the reaction D-glucose 6-phosphate + UDP-alpha-D-glucose = alpha,alpha-trehalose 6-phosphate + UDP + H(+). Its pathway is carbohydrate biosynthesis. Functionally, synthase catalytic subunit of the trehalose synthase complex that catalyzes the production of trehalose from glucose-6-phosphate and UDP-alpha-D-glucose in a two step process. The chain is Alpha,alpha-trehalose-phosphate synthase [UDP-forming] 2 from Aspergillus niger.